The chain runs to 310 residues: Tagatose-6-phosphate kinase (310 aa).

This sequence belongs to the carbohydrate kinase PfkB family. LacC subfamily.

The enzyme catalyses D-tagatofuranose 6-phosphate + ATP = D-tagatofuranose 1,6-bisphosphate + ADP + H(+). It participates in carbohydrate metabolism; D-tagatose 6-phosphate degradation; D-glyceraldehyde 3-phosphate and glycerone phosphate from D-tagatose 6-phosphate: step 1/2. The sequence is that of Tagatose-6-phosphate kinase from Streptococcus agalactiae serotype Ia (strain ATCC 27591 / A909 / CDC SS700).